Reading from the N-terminus, the 449-residue chain is Tubulin beta chain (449 aa).

The GTP site is built by glutamine 11, glutamate 69, serine 138, glycine 142, threonine 143, glycine 144, asparagine 204, and asparagine 226. Glutamate 69 serves as a coordination point for Mg(2+). Residues 426-449 (QDATAEEEGEFDEEEGVMDAEGAA) form a disordered region. The span at 429–443 (TAEEEGEFDEEEGVM) shows a compositional bias: acidic residues.

It belongs to the tubulin family. Dimer of alpha and beta chains. A typical microtubule is a hollow water-filled tube with an outer diameter of 25 nm and an inner diameter of 15 nM. Alpha-beta heterodimers associate head-to-tail to form protofilaments running lengthwise along the microtubule wall with the beta-tubulin subunit facing the microtubule plus end conferring a structural polarity. Microtubules usually have 13 protofilaments but different protofilament numbers can be found in some organisms and specialized cells. Requires Mg(2+) as cofactor.

The protein resides in the cytoplasm. It is found in the cytoskeleton. Its function is as follows. Tubulin is the major constituent of microtubules, a cylinder consisting of laterally associated linear protofilaments composed of alpha- and beta-tubulin heterodimers. Microtubules grow by the addition of GTP-tubulin dimers to the microtubule end, where a stabilizing cap forms. Below the cap, tubulin dimers are in GDP-bound state, owing to GTPase activity of alpha-tubulin. This chain is Tubulin beta chain, found in Eimeria tenella (Coccidian parasite).